The primary structure comprises 352 residues: Maleylacetate reductase (352 aa).

NAD(+) is bound by residues 93-94 (GS) and 115-119 (TTYAG).

The protein belongs to the iron-containing alcohol dehydrogenase family. The cofactor is The maleylacetate reductase family of enzymes does not require any metal ion for activity, despite being related to the family III metal-dependent polyol dehydrogenases..

It catalyses the reaction 3-oxoadipate + NAD(+) = maleylacetate + NADH + H(+). Its pathway is xenobiotic degradation; gamma-hexachlorocyclohexane degradation. Functionally, catalyzes the NADH-dependent reduction of maleylacetate to beta-ketoadipate, a step in the degradation of gamma-hexachlorocyclohexane (gamma-HCH or lindane). Has an essential role in this assimilation pathway that allows S.japonicum UT26 to grow on gamma-HCH as the sole source of carbon and energy. This Sphingobium indicum (strain DSM 16413 / CCM 7287 / MTCC 6362 / UT26 / NBRC 101211 / UT26S) (Sphingobium japonicum) protein is Maleylacetate reductase.